The primary structure comprises 710 residues: Polyribonucleotide nucleotidyltransferase (710 aa).

Residues aspartate 486 and aspartate 492 each coordinate Mg(2+). Residues proline 553–isoleucine 612 form the KH domain. An S1 motif domain is found at glycine 622–lysine 690. Residues lysine 690–glutamate 710 are disordered. Residues glutamate 694 to glutamate 710 show a composition bias toward low complexity.

It belongs to the polyribonucleotide nucleotidyltransferase family. Component of the RNA degradosome, which is a multiprotein complex involved in RNA processing and mRNA degradation. Requires Mg(2+) as cofactor.

It is found in the cytoplasm. The enzyme catalyses RNA(n+1) + phosphate = RNA(n) + a ribonucleoside 5'-diphosphate. Its function is as follows. Involved in mRNA degradation. Catalyzes the phosphorolysis of single-stranded polyribonucleotides processively in the 3'- to 5'-direction. The chain is Polyribonucleotide nucleotidyltransferase from Erwinia tasmaniensis (strain DSM 17950 / CFBP 7177 / CIP 109463 / NCPPB 4357 / Et1/99).